Consider the following 187-residue polypeptide: UPF0301 protein LPC_2717 (187 aa).

The protein belongs to the UPF0301 (AlgH) family.

This Legionella pneumophila (strain Corby) protein is UPF0301 protein LPC_2717.